We begin with the raw amino-acid sequence, 618 residues long: DNA mismatch repair protein MutL (618 aa).

Residues glutamine 348–phenylalanine 359 show a composition bias toward polar residues. Residues glutamine 348–threonine 400 form a disordered region. The segment covering serine 377–arginine 388 has biased composition (low complexity).

It belongs to the DNA mismatch repair MutL/HexB family.

In terms of biological role, this protein is involved in the repair of mismatches in DNA. It is required for dam-dependent methyl-directed DNA mismatch repair. May act as a 'molecular matchmaker', a protein that promotes the formation of a stable complex between two or more DNA-binding proteins in an ATP-dependent manner without itself being part of a final effector complex. The sequence is that of DNA mismatch repair protein MutL from Pseudoalteromonas translucida (strain TAC 125).